Reading from the N-terminus, the 1648-residue chain is Homeostatic regulator of DAG (1648 aa).

The 97-residue stretch at 5-101 (IPPTLPLDLQ…YRVTTINSTS (97 aa)) folds into the DMAP1-binding domain. N-linked (GlcNAc...) asparagine glycosylation is found at Asn-28, Asn-71, and Asn-98. 2 disordered regions span residues 52–73 (PYTP…RNTS) and 96–130 (TINS…ENGS). Basic residues predominate over residues 60 to 71 (NSRKSKHLHRRN). Composition is skewed to polar residues over residues 96–105 (TINSTSANNT) and 113–128 (YTAS…SDEN). Ser-99 carries the post-translational modification Phosphoserine. N-linked (GlcNAc...) asparagine glycosylation is found at Asn-128, Asn-151, and Asn-209. The interval 158–893 (AMTDSLPLIL…VEKKFLNNDL (736 aa)) is fatty acyl-AMP ligase-like domain 1. A helical transmembrane segment spans residues 228–248 (VIEFTIALLGCFISGMAAVPV). Asn-288, Asn-328, Asn-575, Asn-644, and Asn-730 each carry an N-linked (GlcNAc...) asparagine glycan. Ser-751 is modified (phosphoserine). N-linked (GlcNAc...) asparagine glycans are attached at residues Asn-881, Asn-917, Asn-995, and Asn-1009. Positions 950-1648 (VKPKLALQCS…LLSDYEKDNI (699 aa)) are fatty acyl-AMP ligase-like domain 2. Residues 1061–1081 (YVAMIMACLYCNLLVIPLPSV) traverse the membrane as a helical segment. A glycan (N-linked (GlcNAc...) asparagine) is linked at Asn-1198. Residues 1224 to 1244 (GLGFMFSCLLGIYTGASTCLF) traverse the membrane as a helical segment. Residues Asn-1301, Asn-1302, Asn-1447, Asn-1472, Asn-1488, Asn-1565, Asn-1597, and Asn-1634 are each glycosylated (N-linked (GlcNAc...) asparagine).

The protein localises to the vacuole membrane. Its subcellular location is the mitochondrion membrane. Homeostatic regulator of a chemically distinct subset of diacylglycerols (DAGs) with C36 chain length that prevents the toxic accumulation of these specific DAGs in the logarithmic growth phase, which otherwise leads to endoplasmic reticulum stress. Maintains the basal level of DAG subspecies by directly facilitating DAG to triacylglycerol (TAG) conversion process, possibly via adenylation activity of its FLD domains. Does not affect the abundant DAG species (representing over 90% of total DAG pool), comprised of C32 and C34 chain lengths. Required for vacuole fusion-mediated osmoadaptation. In Saccharomyces cerevisiae (strain ATCC 204508 / S288c) (Baker's yeast), this protein is Homeostatic regulator of DAG.